Here is a 262-residue protein sequence, read N- to C-terminus: Nodulation protein J (262 aa).

Positions alanine 33 to arginine 259 constitute an ABC transmembrane type-2 domain. 6 consecutive transmembrane segments (helical) span residues leucine 35–valine 55, valine 60–threonine 80, alanine 125–leucine 145, leucine 148–valine 168, tyrosine 177–phenylalanine 197, and valine 231–leucine 251.

The protein belongs to the ABC-2 integral membrane protein family. Lipooligosaccharide exporter (TC 3.A.1.102) subfamily. The complex is composed of two ATP-binding proteins (NodI) and two transmembrane proteins (NodJ).

It is found in the cell inner membrane. Part of the ABC transporter complex NodIJ involved in the export of the nodulation factors (Nod factors), the bacterial signal molecules that induce symbiosis and subsequent nodulation induction. Nod factors are LCO (lipo-chitin oligosaccharide), a modified beta-1,4-linked N-acetylglucosamine oligosaccharide. This subunit encodes the transporter. This is Nodulation protein J (nodJ) from Rhizobium leguminosarum bv. trifolii.